The sequence spans 215 residues: MVKVKICGVKKLESALQLDGLVDYIGFVHSLLGGPRSVPLEAARIMASQIEKSKTVLVVHGSSPSYAAAAADGFDVLQYHEPLLPSSAASLQATLDPLGVTLAVVVEYTGSAWKPQEPCGYINELNKEGVEPEYILLDTTKGLRDRIPLNEAAKASRCSHRVGLAGGLTPRDACKAVETGVSLIDVSRGVETGVPGVKDPLLSAELIMGAKRCSS.

The protein belongs to the TrpF family.

It carries out the reaction N-(5-phospho-beta-D-ribosyl)anthranilate = 1-(2-carboxyphenylamino)-1-deoxy-D-ribulose 5-phosphate. The protein operates within amino-acid biosynthesis; L-tryptophan biosynthesis; L-tryptophan from chorismate: step 3/5. This is N-(5'-phosphoribosyl)anthranilate isomerase (trpF) from Aeropyrum pernix (strain ATCC 700893 / DSM 11879 / JCM 9820 / NBRC 100138 / K1).